The following is a 95-amino-acid chain: Bacterial microcompartment shell protein EutM (95 aa).

The BMC domain maps to A6–P90.

Belongs to the bacterial microcompartments protein family. As to quaternary structure, homohexamer; has a positively charged pore 9 Angstroms in diameter. The hexamers pack into a two-dimensional array. May interact with EutQ.

The protein localises to the bacterial microcompartment. It participates in amine and polyamine degradation; ethanolamine degradation. Its function is as follows. A component of the bacterial microcompartment (BMC) shell dedicated to ethanolamine degradation. Each homohexamer has a central pore with an opening of up to 9.0 Angstroms. Expression of the eut operon may allow this bacteria to use ethanolamine as a carbon, nitrogen and energy source. The pore probably allows metabolite passage into and out of the BMC. This chain is Bacterial microcompartment shell protein EutM, found in Clostridioides difficile (strain 630) (Peptoclostridium difficile).